Here is a 93-residue protein sequence, read N- to C-terminus: Pyrimidine/purine nucleoside phosphorylase (93 aa).

This sequence belongs to the nucleoside phosphorylase PpnP family.

It catalyses the reaction a purine D-ribonucleoside + phosphate = a purine nucleobase + alpha-D-ribose 1-phosphate. The enzyme catalyses adenosine + phosphate = alpha-D-ribose 1-phosphate + adenine. The catalysed reaction is cytidine + phosphate = cytosine + alpha-D-ribose 1-phosphate. It carries out the reaction guanosine + phosphate = alpha-D-ribose 1-phosphate + guanine. It catalyses the reaction inosine + phosphate = alpha-D-ribose 1-phosphate + hypoxanthine. The enzyme catalyses thymidine + phosphate = 2-deoxy-alpha-D-ribose 1-phosphate + thymine. The catalysed reaction is uridine + phosphate = alpha-D-ribose 1-phosphate + uracil. It carries out the reaction xanthosine + phosphate = alpha-D-ribose 1-phosphate + xanthine. Its function is as follows. Catalyzes the phosphorolysis of diverse nucleosides, yielding D-ribose 1-phosphate and the respective free bases. Can use uridine, adenosine, guanosine, cytidine, thymidine, inosine and xanthosine as substrates. Also catalyzes the reverse reactions. This chain is Pyrimidine/purine nucleoside phosphorylase, found in Vibrio atlanticus (strain LGP32) (Vibrio splendidus (strain Mel32)).